Consider the following 210-residue polypeptide: ATP-dependent Clp protease proteolytic subunit (210 aa).

Ser107 serves as the catalytic Nucleophile. His132 is a catalytic residue.

The protein belongs to the peptidase S14 family. In terms of assembly, fourteen ClpP subunits assemble into 2 heptameric rings which stack back to back to give a disk-like structure with a central cavity, resembling the structure of eukaryotic proteasomes.

It localises to the cytoplasm. It catalyses the reaction Hydrolysis of proteins to small peptides in the presence of ATP and magnesium. alpha-casein is the usual test substrate. In the absence of ATP, only oligopeptides shorter than five residues are hydrolyzed (such as succinyl-Leu-Tyr-|-NHMec, and Leu-Tyr-Leu-|-Tyr-Trp, in which cleavage of the -Tyr-|-Leu- and -Tyr-|-Trp bonds also occurs).. Its function is as follows. Cleaves peptides in various proteins in a process that requires ATP hydrolysis. Has a chymotrypsin-like activity. Plays a major role in the degradation of misfolded proteins. This Cereibacter sphaeroides (strain ATCC 17029 / ATH 2.4.9) (Rhodobacter sphaeroides) protein is ATP-dependent Clp protease proteolytic subunit.